A 479-amino-acid chain; its full sequence is Aspartyl/glutamyl-tRNA(Asn/Gln) amidotransferase subunit B (479 aa).

It belongs to the GatB/GatE family. GatB subfamily. Heterotrimer of A, B and C subunits.

It catalyses the reaction L-glutamyl-tRNA(Gln) + L-glutamine + ATP + H2O = L-glutaminyl-tRNA(Gln) + L-glutamate + ADP + phosphate + H(+). The enzyme catalyses L-aspartyl-tRNA(Asn) + L-glutamine + ATP + H2O = L-asparaginyl-tRNA(Asn) + L-glutamate + ADP + phosphate + 2 H(+). Functionally, allows the formation of correctly charged Asn-tRNA(Asn) or Gln-tRNA(Gln) through the transamidation of misacylated Asp-tRNA(Asn) or Glu-tRNA(Gln) in organisms which lack either or both of asparaginyl-tRNA or glutaminyl-tRNA synthetases. The reaction takes place in the presence of glutamine and ATP through an activated phospho-Asp-tRNA(Asn) or phospho-Glu-tRNA(Gln). This chain is Aspartyl/glutamyl-tRNA(Asn/Gln) amidotransferase subunit B, found in Streptococcus pyogenes serotype M28 (strain MGAS6180).